The chain runs to 368 residues: Phosphate acyltransferase (368 aa).

A disordered region spans residues 335–368 (VSLGDGEHDAGGAGPASPAAGHHAEPSAAQSSKA). Residues 349-368 (PASPAAGHHAEPSAAQSSKA) show a composition bias toward low complexity.

The protein belongs to the PlsX family. As to quaternary structure, homodimer. Probably interacts with PlsY.

The protein localises to the cytoplasm. The catalysed reaction is a fatty acyl-[ACP] + phosphate = an acyl phosphate + holo-[ACP]. It functions in the pathway lipid metabolism; phospholipid metabolism. Functionally, catalyzes the reversible formation of acyl-phosphate (acyl-PO(4)) from acyl-[acyl-carrier-protein] (acyl-ACP). This enzyme utilizes acyl-ACP as fatty acyl donor, but not acyl-CoA. This chain is Phosphate acyltransferase, found in Burkholderia multivorans (strain ATCC 17616 / 249).